Consider the following 159-residue polypeptide: NAD(P)H-quinone oxidoreductase subunit J, chloroplastic (159 aa).

This sequence belongs to the complex I 30 kDa subunit family. In terms of assembly, NDH is composed of at least 16 different subunits, 5 of which are encoded in the nucleus.

The protein localises to the plastid. Its subcellular location is the chloroplast thylakoid membrane. It carries out the reaction a plastoquinone + NADH + (n+1) H(+)(in) = a plastoquinol + NAD(+) + n H(+)(out). It catalyses the reaction a plastoquinone + NADPH + (n+1) H(+)(in) = a plastoquinol + NADP(+) + n H(+)(out). NDH shuttles electrons from NAD(P)H:plastoquinone, via FMN and iron-sulfur (Fe-S) centers, to quinones in the photosynthetic chain and possibly in a chloroplast respiratory chain. The immediate electron acceptor for the enzyme in this species is believed to be plastoquinone. Couples the redox reaction to proton translocation, and thus conserves the redox energy in a proton gradient. The chain is NAD(P)H-quinone oxidoreductase subunit J, chloroplastic from Populus trichocarpa (Western balsam poplar).